A 707-amino-acid polypeptide reads, in one-letter code: Protein SGM1 (707 aa).

The span at 1–11 (MSKKLSLEERL) shows a compositional bias: basic and acidic residues. The tract at residues 1–52 (MSKKLSLEERLSLATKKGRKKNKRSTSNLSSPSPVVLSNNEQESARTSIDDA) is disordered. Residue S2 is modified to N-acetylserine. The span at 27-40 (SNLSSPSPVVLSNN) shows a compositional bias: low complexity. Residues 122-473 (VEELVKEISP…KPHQENSNEK (352 aa)) adopt a coiled-coil conformation. 7 positions are modified to phosphoserine: S151, S538, S549, S568, S571, S576, and S589. Residues 594 to 706 (SAHLVNKLST…QQMVEMQGKM (113 aa)) adopt a coiled-coil conformation.

This sequence belongs to the SGM1 family. Interacts with YPT6.

Its subcellular location is the golgi apparatus. In terms of biological role, required for normal growth rate on galactose and mannose. The polypeptide is Protein SGM1 (SGM1) (Saccharomyces cerevisiae (strain ATCC 204508 / S288c) (Baker's yeast)).